The following is a 386-amino-acid chain: Bifunctional chorismate mutase/prephenate dehydratase (386 aa).

A Chorismate mutase domain is found at 1-92 (MTSENPLLAL…DSVLTQQALL (92 aa)). Positions 11, 28, 39, 48, 52, 84, and 88 each coordinate substrate. The region spanning 105–285 (RIAFLGPKGS…NFTRFVVLAR (181 aa)) is the Prephenate dehydratase domain. An ACT domain is found at 299-376 (TLLMATGQQA…RSMKVLGCYP (78 aa)).

The protein localises to the cytoplasm. The catalysed reaction is chorismate = prephenate. The enzyme catalyses prephenate + H(+) = 3-phenylpyruvate + CO2 + H2O. The protein operates within amino-acid biosynthesis; L-phenylalanine biosynthesis; phenylpyruvate from prephenate: step 1/1. It functions in the pathway metabolic intermediate biosynthesis; prephenate biosynthesis; prephenate from chorismate: step 1/1. In terms of biological role, catalyzes the Claisen rearrangement of chorismate to prephenate and the decarboxylation/dehydration of prephenate to phenylpyruvate. This is Bifunctional chorismate mutase/prephenate dehydratase (pheA) from Escherichia coli O157:H7.